Here is a 153-residue protein sequence, read N- to C-terminus: MSRVTAIISALVICIIVCLSWAVNHYRDNAITYKAQRDKNARELKLANAAITDMQMRQRDVAALDAKYTKELADAKAENDALRDDVAAGRRRLHIKAVCQSVREATTASGVDNAASPRLADTAERDYFTLRERLITMQKQLEGTQKYINEQCR.

The Cytoplasmic portion of the chain corresponds to 1 to 3 (MSR). Residues 4–24 (VTAIISALVICIIVCLSWAVN) form a helical; Signal-anchor for type II membrane protein membrane-spanning segment. Over 25 to 153 (HYRDNAITYK…TQKYINEQCR (129 aa)) the chain is Periplasmic. Residues 65 to 92 (DAKYTKELADAKAENDALRDDVAAGRRR) are a coiled coil.

This sequence belongs to the Lambdavirus i-spanin family. As to quaternary structure, homodimer; disulfide-linked. Interacts (via C-terminus) with the spanin outer lipoprotein subunit (via C-terminus). Part of the spanin complex which spans the entire periplasmic space. The spanin complex is composed of one homodimer of the i-spanin linked by intermolecular disulfide bonds involving two Cys residues and one homodimer of the o-spanin covalently linked by an intermolecular disulfide bond involving one Cys.

Its subcellular location is the host cell inner membrane. In terms of biological role, component of the spanin complex that disrupts the host outer membrane and participates in cell lysis during virus exit. The spanin complex conducts the final step in host lysis by disrupting the outer membrane after holin and endolysin have permeabilized the inner membrane and degraded the host peptidoglycans. Host outer membrane disruption is due to local fusion between the inner and outer membrane performed by the spanin complex. The chain is Spanin, inner membrane subunit (Rz) from Escherichia phage lambda (Bacteriophage lambda).